The sequence spans 598 residues: uncharacterized protein (598 aa).

This is an uncharacterized protein from Homo sapiens (Human).